The sequence spans 155 residues: NADPH-dependent 7-cyano-7-deazaguanine reductase (155 aa).

The active-site Thioimide intermediate is the Cys-52. Asp-59 (proton donor) is an active-site residue. Substrate-binding positions include 74–76 (VES) and 93–94 (HE).

This sequence belongs to the GTP cyclohydrolase I family. QueF type 1 subfamily.

It localises to the cytoplasm. It carries out the reaction 7-aminomethyl-7-carbaguanine + 2 NADP(+) = 7-cyano-7-deazaguanine + 2 NADPH + 3 H(+). Its pathway is tRNA modification; tRNA-queuosine biosynthesis. Catalyzes the NADPH-dependent reduction of 7-cyano-7-deazaguanine (preQ0) to 7-aminomethyl-7-deazaguanine (preQ1). The chain is NADPH-dependent 7-cyano-7-deazaguanine reductase from Syntrophobacter fumaroxidans (strain DSM 10017 / MPOB).